Here is a 430-residue protein sequence, read N- to C-terminus: 3-phosphoshikimate 1-carboxyvinyltransferase (430 aa).

3 residues coordinate 3-phosphoshikimate: Lys23, Ser24, and Arg28. Lys23 is a binding site for phosphoenolpyruvate. Positions 95 and 123 each coordinate phosphoenolpyruvate. 3-phosphoshikimate is bound by residues Ser169, Gln171, Asp315, and Lys342. Gln171 lines the phosphoenolpyruvate pocket. Catalysis depends on Asp315, which acts as the Proton acceptor. Phosphoenolpyruvate-binding residues include Arg346 and Arg388.

It belongs to the EPSP synthase family. In terms of assembly, monomer.

The protein localises to the cytoplasm. The enzyme catalyses 3-phosphoshikimate + phosphoenolpyruvate = 5-O-(1-carboxyvinyl)-3-phosphoshikimate + phosphate. It functions in the pathway metabolic intermediate biosynthesis; chorismate biosynthesis; chorismate from D-erythrose 4-phosphate and phosphoenolpyruvate: step 6/7. Catalyzes the transfer of the enolpyruvyl moiety of phosphoenolpyruvate (PEP) to the 5-hydroxyl of shikimate-3-phosphate (S3P) to produce enolpyruvyl shikimate-3-phosphate and inorganic phosphate. This chain is 3-phosphoshikimate 1-carboxyvinyltransferase, found in Streptococcus pyogenes serotype M2 (strain MGAS10270).